The sequence spans 249 residues: MRMLPDFFTGNWDDMFQGLLETEYVFDFPEPSEASEEMSLHDLFDVEVDGFEEDANQEAVDGMFPERLLSEAESAAESGSGDSGVGEELLPVDLDLKCYEDGLPPSDPETDEATEAEEEAAMPTYVNENENELVLDCPENPGRGCRACDFHRGTSGNPEAMCALCYMRLTGHCIYSPISDAEGESESGSPEDTDFPHPLTATPPHGIVRTIPCRVSCRRRPAVECIEDLLEEDPTDEPLNLSLKRPKCS.

Residues 38–46 (MSLHDLFDV) are interaction with RB1 in competition with E2F1. Residues 74 to 131 (SAAESGSGDSGVGEELLPVDLDLKCYEDGLPPSDPETDEATEAEEEAAMPTYVNENEN) are interaction with UBE2I. The LXCXE motif, interaction with host RB1 and TMEM173/STING signature appears at 96–100 (LKCYE). A zinc finger lies at 145-165 (CRACDFHRGTSGNPEAMCALC). The tract at residues 180-203 (DAEGESESGSPEDTDFPHPLTATP) is disordered. Acidic residues predominate over residues 181-193 (AEGESESGSPEDT). The PXDLS motif, CTBP-binding motif lies at 238 to 242 (PLNLS). The Nuclear localization signal signature appears at 244–248 (KRPKC).

Belongs to the adenoviridae E1A protein family. In terms of assembly, interacts with host UBE2I; this interaction interferes with polySUMOylation. Interacts with host RB1; this interaction induces the aberrant dissociation of RB1-E2F1 complex thereby disrupting the activity of RB1 and activating E2F1-regulated genes. Interacts with host ATF7; the interaction enhances ATF7-mediated viral transactivation activity which requires the zinc binding domains of both proteins. Isoform early E1A 32 kDa protein and isoform early E1A 26 kDa protein interact (via N-terminus) with CUL1 and E3 ubiquitin ligase RBX1; these interactions inhibit RBX1-CUL1-dependent elongation reaction of ubiquitin chains and attenuate ubiquitination of SCF(FBXW7) target proteins. Interacts (via PXLXP motif) with host ZMYND11/BS69 (via MYND-type zinc finger); this interaction inhibits E1A mediated transactivation. Interacts with host EP300; this interaction stimulates the acetylation of RB1 by recruiting EP300 and RB1 into a multimeric-protein complex. Interacts with host CTBP1 and CTBP2; this interaction seems to potentiate viral replication. Interacts with host DCAF7. Interacts with host DYRK1A. Interacts with host KPNA4; this interaction allows E1A import into the host nucleus. Interacts with host EP400; this interaction stabilizes MYC. Interacts with host TBP protein; this interaction probably disrupts the TBP-TATA complex. Interacts (via LXCXE motif) with host TMEM173/STING; this interaction impairs the ability of TMEM173/STING to sense cytosolic DNA and promote the production of type I interferon (IFN-alpha and IFN-beta). Interacts (via C-terminus) with host ZBED1/hDREF (via C-terminus); the interaction is direct.

It is found in the host nucleus. Functionally, plays a role in viral genome replication by driving entry of quiescent cells into the cell cycle. Stimulation of progression from G1 to S phase allows the virus to efficiently use the cellular DNA replicating machinery to achieve viral genome replication. E1A protein has both transforming and trans-activating activities. Induces the disassembly of the E2F1 transcription factor from RB1 by direct competition for the same binding site on RB1, with subsequent transcriptional activation of E2F1-regulated S-phase genes and of the E2 region of the adenoviral genome. Release of E2F1 leads to the ARF-mediated inhibition of MDM2 and causes TP53/p53 to accumulate because it is not targeted for degradation by MDM2-mediated ubiquitination anymore. This increase in TP53, in turn, would arrest the cell proliferation and direct its death but this effect is counteracted by the viral protein E1B-55K. Inactivation of the ability of RB1 to arrest the cell cycle is critical for cellular transformation, uncontrolled cellular growth and proliferation induced by viral infection. Interaction with RBX1 and CUL1 inhibits ubiquitination of the proteins targeted by SCF(FBXW7) ubiquitin ligase complex, and may be linked to unregulated host cell proliferation. The tumorigenesis-restraining activity of E1A may be related to the disruption of the host CtBP-CtIP complex through the CtBP binding motif. Interaction with host TMEM173/STING impairs the ability of TMEM173/STING to sense cytosolic DNA and promote the production of type I interferon (IFN-alpha and IFN-beta). Promotes the sumoylation of host ZBED1/hDREF with SUMO1. This chain is Early E1A protein, found in Homo sapiens (Human).